We begin with the raw amino-acid sequence, 499 residues long: Cobyric acid synthase (499 aa).

The GATase cobBQ-type domain maps to 251 to 442 (SLDIAVVSLK…LHGVFDNLEW (192 aa)). Cys332 (nucleophile) is an active-site residue. His434 is an active-site residue.

This sequence belongs to the CobB/CobQ family. CobQ subfamily.

It functions in the pathway cofactor biosynthesis; adenosylcobalamin biosynthesis. Its function is as follows. Catalyzes amidations at positions B, D, E, and G on adenosylcobyrinic A,C-diamide. NH(2) groups are provided by glutamine, and one molecule of ATP is hydrogenolyzed for each amidation. This Streptococcus sanguinis (strain SK36) protein is Cobyric acid synthase.